The chain runs to 204 residues: Superoxide dismutase [Mn] (204 aa).

Mn(2+) contacts are provided by H29, H84, D167, and H171.

This sequence belongs to the iron/manganese superoxide dismutase family. As to quaternary structure, homotetramer. It depends on Mn(2+) as a cofactor.

It catalyses the reaction 2 superoxide + 2 H(+) = H2O2 + O2. Its function is as follows. Destroys superoxide anion radicals which are normally produced within the cells and which are toxic to biological systems. The protein is Superoxide dismutase [Mn] (sodA) of Thermus aquaticus.